A 1183-amino-acid polypeptide reads, in one-letter code: Rab11 family-interacting protein 3 (1183 aa).

A disordered region spans residues 423–448 (AEDPSTESLPRKNGQEESKSALPVST). A compositionally biased stretch (basic and acidic residues) spans 431–441 (LPRKNGQEESK). EF-hand domains lie at 706–741 (EEQSALRAVFQALDQDGDGFVHIEEFIEFAKAYGAE) and 738–773 (YGAEQVKDLTRFLDPSGLGVISFEDFHRGISAISNE). Asp-719, Asp-721, Asp-723, Glu-730, Asp-751, Ser-753, and Asp-762 together coordinate Ca(2+). The stretch at 902 to 1121 (ELEKDSLESE…NGQIINLSIQ (220 aa)) forms a coiled coil. The interval 911 to 1015 (EEQHARLRQE…LQDEADDITQ (105 aa)) is ARF-binding domain (ABD). Residues 1005 to 1044 (KLQDEADDITQRLNEESESRRKMSDKLSHERHTNQKEKEC) are disordered. The FIP-RBD domain maps to 1121-1183 (QGAKSLFTES…ESNPSILEVK (63 aa)).

Its subcellular location is the recycling endosome membrane. The protein localises to the cytoplasm. It localises to the cytoskeleton. The protein resides in the microtubule organizing center. It is found in the centrosome. Its subcellular location is the cleavage furrow. The protein localises to the midbody. It localises to the golgi apparatus membrane. The protein resides in the golgi apparatus. It is found in the trans-Golgi network membrane. Functionally, downstream effector molecule for Rab11 GTPase which acts as a regulator of endocytic trafficking, cytokinesis and intracellular ciliogenesis by participating in membrane delivery. This is Rab11 family-interacting protein 3 (rab11fip3) from Danio rerio (Zebrafish).